A 529-amino-acid chain; its full sequence is ATP synthase subunit alpha (529 aa).

Residue 173 to 180 (GDRQTGKT) participates in ATP binding.

It belongs to the ATPase alpha/beta chains family. In terms of assembly, F-type ATPases have 2 components, CF(1) - the catalytic core - and CF(0) - the membrane proton channel. CF(1) has five subunits: alpha(3), beta(3), gamma(1), delta(1), epsilon(1). CF(0) has three main subunits: a(1), b(2) and c(9-12). The alpha and beta chains form an alternating ring which encloses part of the gamma chain. CF(1) is attached to CF(0) by a central stalk formed by the gamma and epsilon chains, while a peripheral stalk is formed by the delta and b chains.

The protein localises to the cell membrane. The catalysed reaction is ATP + H2O + 4 H(+)(in) = ADP + phosphate + 5 H(+)(out). Its function is as follows. Produces ATP from ADP in the presence of a proton gradient across the membrane. The alpha chain is a regulatory subunit. In Streptomyces lividans, this protein is ATP synthase subunit alpha.